We begin with the raw amino-acid sequence, 483 residues long: ATP-dependent protease ATPase subunit HslU (483 aa).

Residues V18 and G60 to E65 each bind ATP. 2 stretches are compositionally biased toward low complexity: residues L136–Q147 and A171–P181. The tract at residues L136–V212 is disordered. The segment covering T182–R191 has biased composition (polar residues). Residues S192 to D209 are compositionally biased toward basic and acidic residues. Residues D296, E361, and R433 each coordinate ATP.

This sequence belongs to the ClpX chaperone family. HslU subfamily. In terms of assembly, a double ring-shaped homohexamer of HslV is capped on each side by a ring-shaped HslU homohexamer. The assembly of the HslU/HslV complex is dependent on binding of ATP.

The protein resides in the cytoplasm. Its function is as follows. ATPase subunit of a proteasome-like degradation complex; this subunit has chaperone activity. The binding of ATP and its subsequent hydrolysis by HslU are essential for unfolding of protein substrates subsequently hydrolyzed by HslV. HslU recognizes the N-terminal part of its protein substrates and unfolds these before they are guided to HslV for hydrolysis. This chain is ATP-dependent protease ATPase subunit HslU, found in Nitratidesulfovibrio vulgaris (strain DSM 19637 / Miyazaki F) (Desulfovibrio vulgaris).